A 157-amino-acid polypeptide reads, in one-letter code: Transcription elongation factor GreA (157 aa).

A coiled-coil region spans residues 46–73 (AEYHSARERQSFIEGRIAELEEIISAAE).

The protein belongs to the GreA/GreB family.

Its function is as follows. Necessary for efficient RNA polymerase transcription elongation past template-encoded arresting sites. The arresting sites in DNA have the property of trapping a certain fraction of elongating RNA polymerases that pass through, resulting in locked ternary complexes. Cleavage of the nascent transcript by cleavage factors such as GreA or GreB allows the resumption of elongation from the new 3'terminus. GreA releases sequences of 2 to 3 nucleotides. The protein is Transcription elongation factor GreA of Acidiphilium cryptum (strain JF-5).